The sequence spans 122 residues: MVKSTVPTRPNKYWPGVVAIGLVSLFIFLSVSNQKHSTTSGDNIHKFSNGGTYRDGSKCITYNRNSPLAYNGSSSNNTLFWLCLLGLSMVWIAYCGYKSLSGQWHSCQHDKNERNFLFECFE.

Topologically, residues 1–12 are cytoplasmic; that stretch reads MVKSTVPTRPNK. A helical transmembrane segment spans residues 13–33; it reads YWPGVVAIGLVSLFIFLSVSN. The Lumenal portion of the chain corresponds to 34 to 76; it reads QKHSTTSGDNIHKFSNGGTYRDGSKCITYNRNSPLAYNGSSSN. A helical transmembrane segment spans residues 77 to 97; the sequence is NTLFWLCLLGLSMVWIAYCGY. Residues 98–122 lie on the Cytoplasmic side of the membrane; it reads KSLSGQWHSCQHDKNERNFLFECFE.

This sequence belongs to the virgaviridae/benyvirus TGB2 movement protein family. As to quaternary structure, interacts with movement protein TGB3. TGB1-TGB3-TGB2 complex formation is enhanced by ATP hydrolysis.

It localises to the host cell junction. The protein localises to the host plasmodesma. Its subcellular location is the host endoplasmic reticulum membrane. The protein resides in the host cytoplasm. It is found in the host cytoskeleton. Functionally, participates in the transport of viral genome to neighboring plant cells directly through plasmodesmata, without any budding. TGBp2 and TGBp3 are necessary for intracellular delivery of TGBp1-containing vRNPs to plasmodesmata. Can gate plasmodesmata and increase their size exclusion limit. To a lesser extent than TGB3, induces host actin cytoskeleton network thickening, which probably plays a major role in virus cell-to-cell movement. In Peanut clump virus (isolate 87/TGTA2) (PCV), this protein is Movement protein TGB2.